Consider the following 485-residue polypeptide: Silicon efflux transporter LSI3 (485 aa).

Helical transmembrane passes span 14–34, 37–57, 59–79, 106–126, and 180–200; these read VAFG…LPIG, AGAL…ADDA, ASID…GGYL, VCVV…CVVL, and FLLG…LMLL. Over residues 233–242 the composition is skewed to basic and acidic residues; that stretch reads ALNNNKKDDG. Positions 233–261 are disordered; sequence ALNNNKKDDGDAATPASPEDDDGGDAESM. The next 5 membrane-spanning stretches (helical) occupy residues 283 to 303, 336 to 356, 377 to 397, 418 to 438, and 461 to 481; these read LFLK…YMLG, LLVF…TGLP, VLSV…TVLL, WLLL…GSAA, and HVIF…PLIG.

It belongs to the arsenite-antimonite (ArsB) efflux (TC 2.A.45) family.

It is found in the cell membrane. Functionally, silicon efflux transporter involved in silicon transport in shoots. In the nodes, involved with LSI2 and NIP2-2/LSI6 in silicon intervascular transfer, which is required for the preferential distribution of silicon, such as hyperaccumulation of silicon in the husk. Silicon is beneficial to plant growth and helps plants to overcome abiotic and biotic stresses by preventing lodging (falling over) and increasing resistance to pests and diseases, as well as other stresses. This chain is Silicon efflux transporter LSI3, found in Oryza sativa subsp. japonica (Rice).